The following is a 403-amino-acid chain: S-arrestin (403 aa).

The interval 11–19 (HVIFKKVSR) is interaction with RHO. Phosphothreonine is present on threonine 231. Residues 381–403 (RQNLKDTGENTEGKKDEDAGQDE) are disordered.

This sequence belongs to the arrestin family. As to quaternary structure, monomer. Homodimer. Homotetramer. Interacts with RHO (via the phosphorylated C-terminus). In terms of tissue distribution, detected in retina (at protein level).

Its subcellular location is the cell projection. The protein resides in the cilium. The protein localises to the photoreceptor outer segment. It localises to the membrane. In terms of biological role, binds to photoactivated, phosphorylated RHO and terminates RHO signaling via G-proteins by competing with G-proteins for the same binding site on RHO. May play a role in preventing light-dependent degeneration of retinal photoreceptor cells. This chain is S-arrestin (Sag), found in Mus musculus (Mouse).